Here is a 198-residue protein sequence, read N- to C-terminus: Elongation factor Ts (198 aa).

An involved in Mg(2+) ion dislocation from EF-Tu region spans residues 81–84 (TDFV).

This sequence belongs to the EF-Ts family.

The protein localises to the cytoplasm. Associates with the EF-Tu.GDP complex and induces the exchange of GDP to GTP. It remains bound to the aminoacyl-tRNA.EF-Tu.GTP complex up to the GTP hydrolysis stage on the ribosome. The chain is Elongation factor Ts from Leptospira biflexa serovar Patoc (strain Patoc 1 / Ames).